The primary structure comprises 255 residues: Complement C1q-like protein 3 (255 aa).

Residues 1 to 20 (MVLLLVILIPVLVSSAGTSA) form the signal peptide. Residues 39–109 (KAPSTAATPD…GLPGPPGAPG (71 aa)) are disordered. Residues 61–111 (GPKGEAGRPGKAGPRGPPGEPGPPGPMGPPGEKGEPGRQGLPGPPGAPGLN) form the Collagen-like domain. Over residues 75–89 (RGPPGEPGPPGPMGP) the composition is skewed to pro residues. In terms of domain architecture, C1q spans 122–255 (STVPKIAFYA…TFSGFIIYAD (134 aa)).

As to quaternary structure, forms homooligomers. Interacts with ADGRB3. Interacts with C1QL2 and C1QL4, when proteins are coexpressed; this interaction does not occur after secretion. Highly expressed in adipose tissue, with expression levels at least 2 orders of magnitude higher than in other tissues, including brain and kidney.

It is found in the secreted. In terms of biological role, may regulate the number of excitatory synapses that are formed on hippocampus neurons. Has no effect on inhibitory synapses. Plays a role in glucose homeostasis. Via AMPK signaling pathway, stimulates glucose uptake in adipocytes, myotubes and hepatocytes and enhances insulin-stimulated glucose uptake. In a hepatoma cell line, reduces the expression of gluconeogenic enzymes G6PC1 and PCK1 and hence decreases de novo glucose production. The protein is Complement C1q-like protein 3 (C1QL3) of Homo sapiens (Human).